Reading from the N-terminus, the 607-residue chain is Bifunctional lysine-specific demethylase and histidyl-hydroxylase NO66 (607 aa).

2 disordered regions span residues 23 to 121 and 139 to 184; these read GPTI…IKTN and ATQH…GEVE. Polar residues predominate over residues 25–37; it reads TIQQTGATKTPKT. The segment covering 39–58 has biased composition (basic residues); it reads SKIRRLSIRKSTRKIKHALK. Residues 156 to 167 show a composition bias toward basic and acidic residues; that stretch reads DKTPVKRVRSDT. A JmjC domain is found at 188–405; that stretch reads EEAEKMFEWL…DLMEKLVPAA (218 aa). Residues His-328, Asp-330, and His-371 each coordinate Fe cation.

Belongs to the ROX family. NO66 subfamily. Fe(2+) serves as cofactor.

It is found in the nucleus. The enzyme catalyses L-histidyl-[protein] + 2-oxoglutarate + O2 = (3S)-3-hydroxy-L-histidyl-[protein] + succinate + CO2. The catalysed reaction is N(6),N(6)-dimethyl-L-lysyl(36)-[histone H3] + 2 2-oxoglutarate + 2 O2 = L-lysyl(36)-[histone H3] + 2 formaldehyde + 2 succinate + 2 CO2. Its function is as follows. Oxygenase that can act as both a histone lysine demethylase and a ribosomal histidine hydroxylase. Specifically demethylates 'Lys-4' (H3K4me) and 'Lys-36' (H3K36me) of histone H3, thereby playing a central role in histone code. Also catalyzes the hydroxylation of 60S ribosomal protein L8. The protein is Bifunctional lysine-specific demethylase and histidyl-hydroxylase NO66 of Branchiostoma floridae (Florida lancelet).